Here is a 329-residue protein sequence, read N- to C-terminus: Beta-ketoacyl-[acyl-carrier-protein] synthase III (329 aa).

Residues Cys113 and His255 contribute to the active site. Residues 256–260 form an ACP-binding region; that stretch reads QANQR. Residue Asn285 is part of the active site.

The protein belongs to the thiolase-like superfamily. FabH family. In terms of assembly, homodimer.

The protein resides in the cytoplasm. The catalysed reaction is malonyl-[ACP] + acetyl-CoA + H(+) = 3-oxobutanoyl-[ACP] + CO2 + CoA. It functions in the pathway lipid metabolism; fatty acid biosynthesis. In terms of biological role, catalyzes the condensation reaction of fatty acid synthesis by the addition to an acyl acceptor of two carbons from malonyl-ACP. Catalyzes the first condensation reaction which initiates fatty acid synthesis and may therefore play a role in governing the total rate of fatty acid production. Possesses both acetoacetyl-ACP synthase and acetyl transacylase activities. Its substrate specificity determines the biosynthesis of branched-chain and/or straight-chain of fatty acids. The chain is Beta-ketoacyl-[acyl-carrier-protein] synthase III from Chlorobium chlorochromatii (strain CaD3).